Reading from the N-terminus, the 924-residue chain is DNA repair and recombination protein RDH54 (924 aa).

Residues 1–10 (MQIPKYENKP) are compositionally biased toward basic and acidic residues. Disordered regions lie at residues 1–21 (MQIPKYENKPFKPPRRVGSNK) and 155–182 (EALSQNMGNPNPPTTSTTETVPSTKNDG). Residues 168-178 (TTSTTETVPST) are compositionally biased toward low complexity. A Helicase ATP-binding domain is found at 299–487 (LENDSDISGC…FTIIDFINPG (189 aa)). 346-353 (IPLTGLCK) lines the ATP pocket. The DEGH box motif lies at 472 to 475 (NDLN). A Glycyl lysine isopeptide (Lys-Gly) (interchain with G-Cter in ubiquitin) cross-link involves residue Lys615. The Helicase C-terminal domain maps to 631–790 (KLRVLMTLLE…DSEMRNKESS (160 aa)).

The protein belongs to the SNF2/RAD54 helicase family. As to quaternary structure, interacts with RAD51 and DMC1.

The protein localises to the nucleus. The catalysed reaction is ATP + H2O = ADP + phosphate + H(+). Functionally, involved in the recombinational repair of double-strand breaks (DSB) in DNA during mitosis and meiosis. Has DNA dependent ATPase activity. Promotes D-loop (displacement loop) formation with RAD51 recombinase. Modifies the topology of double-stranded DNA during the D-loop reaction to facilitate the invasion of the homologous duplex molecule by the initiating single-stranded DNA substrate. Required for adaptation from G2/M checkpoint arrest induced by a double strand break, by participating in monitoring the extent of single-stranded DNA produced by resection of DNA ends. This role is distinct from its roles in recombination. Promotes colocalization of RAD51 and DMC1 during meiotic recombination. Involved in crossover interference. The sequence is that of DNA repair and recombination protein RDH54 (RDH54) from Saccharomyces cerevisiae (strain AWRI1631) (Baker's yeast).